A 443-amino-acid chain; its full sequence is Carboxypeptidase M (443 aa).

The N-terminal stretch at Met-1 to Ala-17 is a signal peptide. The 291-residue stretch at Arg-21–Val-311 folds into the Peptidase M14 domain. Asn-38 carries an N-linked (GlcNAc...) asparagine glycan. 2 residues coordinate Zn(2+): His-83 and Glu-86. 3 disulfide bridges follow: Cys-138–Cys-285, Cys-242–Cys-284, and Cys-341–Cys-410. Asn-164 carries an N-linked (GlcNAc...) asparagine glycan. Residue His-190 participates in Zn(2+) binding. The active-site Proton donor/acceptor is Glu-281. Asn-363 carries N-linked (GlcNAc...) asparagine glycosylation. Ser-423 carries GPI-anchor amidated serine lipidation. The propeptide at Ala-424 to Lys-443 is removed in mature form.

It belongs to the peptidase M14 family. Zn(2+) serves as cofactor.

It is found in the cell membrane. It catalyses the reaction Cleavage of C-terminal arginine or lysine residues from polypeptides.. Specifically removes C-terminal basic residues (Arg or Lys) from peptides and proteins. It is believed to play important roles in the control of peptide hormone and growth factor activity at the cell surface, and in the membrane-localized degradation of extracellular proteins. The sequence is that of Carboxypeptidase M (Cpm) from Mus musculus (Mouse).